A 216-amino-acid polypeptide reads, in one-letter code: MRLLHLDSSILTDTSVSRRLTAQVVQDLHAAIDDLHATYRDLAAAPIAHLSGAIAAGFRPLPQPDSDAASVAEHALSEQLVDEFLASDIVVIGAPMYNFSVPTQLKAWIDRIAQPGRTFRYTANGPEGLAGGKQLIVASSRGGMYAQGPMASLDFQEAYLTATFGFLGVRDVYFVRAENQSRGPGPAAAALISAQASIADVVRSVARGVVHTRVEA.

FMN-binding positions include Ser-9, Ser-15–Ser-17, Met-96–Phe-99, and Ser-140–Gly-143.

Belongs to the azoreductase type 1 family. In terms of assembly, homodimer. FMN is required as a cofactor.

The catalysed reaction is 2 a quinone + NADH + H(+) = 2 a 1,4-benzosemiquinone + NAD(+). It carries out the reaction N,N-dimethyl-1,4-phenylenediamine + anthranilate + 2 NAD(+) = 2-(4-dimethylaminophenyl)diazenylbenzoate + 2 NADH + 2 H(+). In terms of biological role, quinone reductase that provides resistance to thiol-specific stress caused by electrophilic quinones. Functionally, also exhibits azoreductase activity. Catalyzes the reductive cleavage of the azo bond in aromatic azo compounds to the corresponding amines. The chain is FMN-dependent NADH:quinone oxidoreductase 2 from Xanthomonas axonopodis pv. citri (strain 306).